Reading from the N-terminus, the 675-residue chain is Gastrula zinc finger protein xFG20-1 (675 aa).

10 consecutive C2H2-type zinc fingers follow at residues 62–84 (FTCT…IRAH), 90–112 (FSCM…YSVH), 118–140 (FSCT…LRVH), 146–168 (YSCE…QRTH), 174–196 (FSCT…LKTH), 202–224 (HLCA…QKIH), 257–279 (FPCT…QSTH), 286–308 (FPCT…QSTH), 344–366 (LPCT…QSTH), and 373–395 (LPCT…QSTH). Positions 302–325 (RTHQSTHTEGQKSLPSTESGGTFS) are disordered. The span at 304–325 (HQSTHTEGQKSLPSTESGGTFS) shows a compositional bias: polar residues. The segment covering 390-407 (THQSTHTSPSTEFGVQTT) has biased composition (polar residues). The tract at residues 390-423 (THQSTHTSPSTEFGVQTTEDNHQSPSKDHTGEKP) is disordered. Positions 408-421 (EDNHQSPSKDHTGE) are enriched in basic and acidic residues. C2H2-type zinc fingers lie at residues 424-446 (FSCS…LVVH), 452-474 (YHCI…QRTH), 480-501 (FSCN…YRVH), 507-529 (YPCT…YKVH), 535-557 (YPCQ…LRTH), 563-585 (FSCT…LTTH), 591-613 (FSCT…YKMH), and 619-642 (FTCT…TTVH).

The protein belongs to the krueppel C2H2-type zinc-finger protein family.

The protein resides in the nucleus. Its function is as follows. May be involved in transcriptional regulation. This chain is Gastrula zinc finger protein xFG20-1, found in Xenopus laevis (African clawed frog).